The sequence spans 66 residues: DNA gyrase inhibitor YacG (66 aa).

Zn(2+) is bound by residues cysteine 9, cysteine 12, cysteine 28, and cysteine 32. The disordered stretch occupies residues 45 to 66 (HKIAGSQESEDELYSGDLEPRH).

Belongs to the DNA gyrase inhibitor YacG family. As to quaternary structure, interacts with GyrB. The cofactor is Zn(2+).

Its function is as follows. Inhibits all the catalytic activities of DNA gyrase by preventing its interaction with DNA. Acts by binding directly to the C-terminal domain of GyrB, which probably disrupts DNA binding by the gyrase. This chain is DNA gyrase inhibitor YacG, found in Pseudomonas putida (strain W619).